Here is a 63-residue protein sequence, read N- to C-terminus: Small ribosomal subunit protein bS21 (63 aa).

This sequence belongs to the bacterial ribosomal protein bS21 family.

This is Small ribosomal subunit protein bS21 from Bacteroides fragilis (strain ATCC 25285 / DSM 2151 / CCUG 4856 / JCM 11019 / LMG 10263 / NCTC 9343 / Onslow / VPI 2553 / EN-2).